Consider the following 260-residue polypeptide: UPF0246 protein BPSL1241 (260 aa).

It belongs to the UPF0246 family.

This chain is UPF0246 protein BPSL1241, found in Burkholderia pseudomallei (strain K96243).